Here is an 88-residue protein sequence, read N- to C-terminus: Small ribosomal subunit protein uS17 (88 aa).

It belongs to the universal ribosomal protein uS17 family. In terms of assembly, part of the 30S ribosomal subunit.

One of the primary rRNA binding proteins, it binds specifically to the 5'-end of 16S ribosomal RNA. This chain is Small ribosomal subunit protein uS17, found in Synechococcus sp. (strain WH7803).